We begin with the raw amino-acid sequence, 394 residues long: Phosphoglycerate kinase (394 aa).

Substrate-binding positions include Asp21–Asn23, Arg36, His59–Arg62, Arg118, and Arg151. At Ser183 the chain carries Phosphoserine. Positions 201 and 292 each coordinate ATP. Thr299 carries the phosphothreonine modification. ATP-binding positions include Glu323 and Gly350–Ser353.

It belongs to the phosphoglycerate kinase family. Monomer.

It localises to the cytoplasm. The enzyme catalyses (2R)-3-phosphoglycerate + ATP = (2R)-3-phospho-glyceroyl phosphate + ADP. Its pathway is carbohydrate degradation; glycolysis; pyruvate from D-glyceraldehyde 3-phosphate: step 2/5. The polypeptide is Phosphoglycerate kinase (Bacillus cereus (strain Q1)).